A 390-amino-acid chain; its full sequence is uncharacterized protein (390 aa).

The protein belongs to the glycosyltransferase group 1 family. Glycosyltransferase 4 subfamily.

This is an uncharacterized protein from Methanocaldococcus jannaschii (strain ATCC 43067 / DSM 2661 / JAL-1 / JCM 10045 / NBRC 100440) (Methanococcus jannaschii).